The sequence spans 66 residues: Large ribosomal subunit protein bL33c (66 aa).

Belongs to the bacterial ribosomal protein bL33 family.

The protein localises to the plastid. It is found in the chloroplast. The polypeptide is Large ribosomal subunit protein bL33c (Daucus carota (Wild carrot)).